A 284-amino-acid polypeptide reads, in one-letter code: Trimeric intracellular cation channel type B-A (284 aa).

At 1–15 (MESLSELSVQFSQLS) the chain is on the lumenal side. Residues 16-33 (MFPFFDMAHYVVSVMSAR) form a helical membrane-spanning segment. Residues 34–46 (EQAGALDIAARSP) lie on the Cytoplasmic side of the membrane. A helical transmembrane segment spans residues 47–68 (MASWFSAMLYCFGGGILSSILL). The Lumenal segment spans residues 69-79 (AEPPIAVLSNT). The chain crosses the membrane as a helical span at residues 80-99 (TNIMLASTIWYMVYYFPYDL). Topologically, residues 100 to 102 (FYN) are cytoplasmic. A helical transmembrane segment spans residues 103–121 (CFFFLPIRLIIAGMKEVTR). Residues K117 and R121 each coordinate a 1,2-diacyl-sn-glycero-3-phospho-(1D-myo-inositol-4,5-bisphosphate). Residues 122–137 (TWKILSGVTHAHSHYK) are Lumenal-facing. The chain crosses the membrane as a helical span at residues 138–155 (DALLVMITIGWARGAGGG). Residues 156–177 (LISNFEQLVRGVWKPESNEFLK) are Cytoplasmic-facing. The helical transmembrane segment at 178 to 195 (MSYPVKVTLIGAVLFTLQ) threads the bilayer. Residues 196–206 (HGHYLPISRHN) are Lumenal-facing. Residues 207–224 (LMLIYTMFLVLIKVTMML) traverse the membrane as a helical segment. Topologically, residues 225-284 (THSTASPFLPLETPLQRILFGQRQKPSEVRQSASSSGAKGKPSKKTLDKDSGEQSKKKDS) are cytoplasmic. Residues 246–284 (QRQKPSEVRQSASSSGAKGKPSKKTLDKDSGEQSKKKDS) are disordered. The segment covering 269–284 (KTLDKDSGEQSKKKDS) has biased composition (basic and acidic residues).

The protein belongs to the TMEM38 family. As to quaternary structure, homotrimer; conformation seems to be controled by binding to diacylglycerol (DAG).

Its subcellular location is the endoplasmic reticulum membrane. The enzyme catalyses K(+)(in) = K(+)(out). Its activity is regulated as follows. Channel activity is activated by increased cytosolic Ca(2+) levels and blocked by luminal high Ca(2+) levels. Its function is as follows. Intracellular monovalent cation channel required for maintenance of rapid intracellular calcium release. Acts as a potassium counter-ion channel that functions in synchronization with calcium release from intracellular stores. Activated by increased cytosolic Ca(2+) levels. This is Trimeric intracellular cation channel type B-A (tmem38b-a) from Xenopus laevis (African clawed frog).